The following is an 806-amino-acid chain: DEP domain-containing protein 1A (806 aa).

One can recognise a DEP domain in the interval 24–108 (FRAAMPLRKH…DNNSLYRFPS (85 aa)). Positions 142–177 (QFSKKTPKRRASVDSKEEQENEDLMEDQRNDDDFPK) are disordered. The span at 167 to 177 (EDQRNDDDFPK) shows a compositional bias: basic and acidic residues. The Rho-GAP domain maps to 279–319 (DYFLNLPEPLLTFEFYELFVNILVVCGYITVPNSHNGKHRF). The tract at residues 564 to 588 (SHSSFPSTSSLLPPTTSPNSTGSES) is disordered.

In Xenopus laevis (African clawed frog), this protein is DEP domain-containing protein 1A (depdc1a).